A 498-amino-acid polypeptide reads, in one-letter code: Probable dipeptidase B (498 aa).

The active site involves C26.

This sequence belongs to the peptidase C69 family.

It catalyses the reaction an L-aminoacyl-L-amino acid + H2O = 2 an L-alpha-amino acid. The protein is Probable dipeptidase B (pepDB) of Streptococcus pyogenes serotype M1.